The primary structure comprises 516 residues: Membrane-bound transcription factor site-2 protease (516 aa).

Topologically, residues 1–3 (MIP) are cytoplasmic. Residues 4–24 (VSLVVVVVGGWTAVYLTDLVL) form a helical membrane-spanning segment. At 25–74 (KSSVYFKHSYEDWLENNGLSISPFHIRWQTAVFNRAFYSWGRRKARMLYQ) the chain is on the lumenal side. 2 consecutive transmembrane segments (helical) span residues 75–95 (WFNF…FLLG) and 96–107 (KTLIQTLGQMMA). Residues 108-141 (DSSYSSSSSSSSHSSSSSSSSSSSSSLYNEQVLQ) are Lumenal-facing. The chain crosses the membrane as a helical span at residues 142 to 166 (VVVPGINLPVNQLTYFFAAVLISGV). H168 contributes to the Zn(2+) binding site. E169 is a catalytic residue. The next 3 helical transmembrane spans lie at 171–183 (GHGI…QVRF), 184–206 (NGFG…TTHL), and 226–248 (FILA…PFYY). Residue H172 participates in Zn(2+) binding. Residues 249–443 (TGVGVLITEV…LPVVVETFVK (195 aa)) are Lumenal-facing. An N-linked (GlcNAc...) asparagine glycan is attached at N334. The next 2 helical transmembrane spans lie at 444-461 (YLIS…VPCF) and 462-473 (ALDGQWILNSFL). Residues 474–489 (DATLTSVIGDNDVKDL) lie on the Lumenal side of the membrane. A helical membrane pass occupies residues 490-510 (IGFFILLGGSILLAANVALGL). The Cytoplasmic portion of the chain corresponds to 511–516 (WMVTAR).

This sequence belongs to the peptidase M50A family. Zn(2+) is required as a cofactor.

The protein resides in the membrane. It localises to the cytoplasm. Its subcellular location is the golgi apparatus membrane. It carries out the reaction Cleaves several transcription factors that are type-2 transmembrane proteins within membrane-spanning domains. Known substrates include sterol regulatory element-binding protein (SREBP) -1, SREBP-2 and forms of the transcriptional activator ATF6. SREBP-2 is cleaved at the site 477-DRSRILL-|-CVLTFLCLSFNPLTSLLQWGGA-505. The residues Asn-Pro, 11 residues distal to the site of cleavage in the membrane-spanning domain, are important for cleavage by S2P endopeptidase. Replacement of either of these residues does not prevent cleavage, but there is no cleavage if both of these residues are replaced.. Its function is as follows. Zinc metalloprotease that mediates intramembrane proteolysis of proteins such as ATF6, ATF6B, SREBF1/SREBP1 and SREBF2/SREBP2. Catalyzes the second step in the proteolytic activation of the sterol regulatory element-binding proteins (SREBPs) SREBF1/SREBP1 and SREBF2/SREBP2: cleaves SREBPs within the first transmembrane segment, thereby releasing the N-terminal segment with a portion of the transmembrane segment attached. Mature N-terminal SREBP fragments shuttle to the nucleus and activate gene transcription. Also mediates the second step in the proteolytic activation of the cyclic AMP-dependent transcription factor ATF-6 (ATF6 and ATF6B). Involved in intramembrane proteolysis during bone formation. In astrocytes and osteoblasts, upon DNA damage and ER stress, mediates the second step of the regulated intramembrane proteolytic activation of the transcription factor CREB3L1, leading to the inhibition of cell-cycle progression. In Bos taurus (Bovine), this protein is Membrane-bound transcription factor site-2 protease.